Here is a 413-residue protein sequence, read N- to C-terminus: Tyrosine--tRNA ligase (413 aa).

Residue tyrosine 34 coordinates L-tyrosine. Residues 39–48 (PTSHSLTVGH) carry the 'HIGH' region motif. L-tyrosine is bound by residues tyrosine 164 and glutamine 168. A 'KMSKS' region motif is present at residues 225–229 (KFGKS). Residue lysine 228 participates in ATP binding. One can recognise an S4 RNA-binding domain in the interval 347-413 (ILLVDALVQT…GKKNNALIVF (67 aa)).

The protein belongs to the class-I aminoacyl-tRNA synthetase family. TyrS type 1 subfamily. In terms of assembly, homodimer.

The protein localises to the cytoplasm. The catalysed reaction is tRNA(Tyr) + L-tyrosine + ATP = L-tyrosyl-tRNA(Tyr) + AMP + diphosphate + H(+). In terms of biological role, catalyzes the attachment of tyrosine to tRNA(Tyr) in a two-step reaction: tyrosine is first activated by ATP to form Tyr-AMP and then transferred to the acceptor end of tRNA(Tyr). The sequence is that of Tyrosine--tRNA ligase from Onion yellows phytoplasma (strain OY-M).